The following is a 123-amino-acid chain: Zinc metalloproteinase-disintegrin-like jerdohagin (123 aa).

In terms of domain architecture, Peptidase M12B spans R6–E52. H12 contacts Zn(2+). C19 and C24 form a disulfide bridge. Positions 48 and 51 each coordinate Ca(2+). Positions L53–N80 constitute a Disintegrin domain. Cystine bridges form between C59–C65, C64–C78, C72–C90, and C106–C116. The short motif at E71–D73 is the D/ECD-tripeptide element.

The protein belongs to the venom metalloproteinase (M12B) family. P-III subfamily. P-IIIa sub-subfamily. In terms of assembly, monomer. Zn(2+) serves as cofactor. Post-translationally, the N-terminus is blocked. As to expression, expressed by the venom gland.

The protein resides in the secreted. Its activity is regulated as follows. Its proteolytic and hemorrhagic activities are inhibited by EDTA, but not by PMSF. Snake venom metalloproteinase that has high hemorrhagic activity and degrades the alpha-chain of fibrinogen (FGA), leaving the beta- and the gamma-chain intact. It may also inhibit platelet aggregation. Cleaves insulin B chain at '25-Phe-|-Val-26', '26-Val-|-Asn-27', '29-His-|-Leu-30', '30-Leu-|-Cys-31', '33-Ser-|-His-34', '35-Leu-|-Val-36', '40-Tyr-|-Leu-41', '41-Leu-|-Val-42', '42-Val-|-Cys-43', '43-Cys-|-Gly-44', '44-Gly-|-Glu-45', '46-Arg-|-Gly-47', '47-Gly-|-Phe-48', '49-Phe-|-Tyr-50' and '52-Pro-|-Lys-53' bonds. Also cleaves human prothrombin (72 kDa) and activation fragment F1 (27 kDa) of activated human prothrombin, to generate two new proteins of 68 and 23 kDa. The polypeptide is Zinc metalloproteinase-disintegrin-like jerdohagin (Protobothrops jerdonii (Jerdon's pitviper)).